The sequence spans 274 residues: Dermonecrotic toxin LarSicTox-alphaIB2bii (274 aa).

Histidine 3 is an active-site residue. Positions 23 and 25 each coordinate Mg(2+). Histidine 39 acts as the Nucleophile in catalysis. Intrachain disulfides connect cysteine 43–cysteine 49 and cysteine 45–cysteine 188. Residue aspartate 83 coordinates Mg(2+). The N-linked (GlcNAc...) asparagine glycan is linked to asparagine 251.

This sequence belongs to the arthropod phospholipase D family. Class II subfamily. It depends on Mg(2+) as a cofactor. As to expression, expressed by the venom gland.

The protein resides in the secreted. The enzyme catalyses an N-(acyl)-sphingosylphosphocholine = an N-(acyl)-sphingosyl-1,3-cyclic phosphate + choline. It carries out the reaction an N-(acyl)-sphingosylphosphoethanolamine = an N-(acyl)-sphingosyl-1,3-cyclic phosphate + ethanolamine. It catalyses the reaction a 1-acyl-sn-glycero-3-phosphocholine = a 1-acyl-sn-glycero-2,3-cyclic phosphate + choline. The catalysed reaction is a 1-acyl-sn-glycero-3-phosphoethanolamine = a 1-acyl-sn-glycero-2,3-cyclic phosphate + ethanolamine. Dermonecrotic toxins cleave the phosphodiester linkage between the phosphate and headgroup of certain phospholipids (sphingolipid and lysolipid substrates), forming an alcohol (often choline) and a cyclic phosphate. This toxin acts on sphingomyelin (SM). It may also act on ceramide phosphoethanolamine (CPE), lysophosphatidylcholine (LPC) and lysophosphatidylethanolamine (LPE), but not on lysophosphatidylserine (LPS), and lysophosphatidylglycerol (LPG). It acts by transphosphatidylation, releasing exclusively cyclic phosphate products as second products. Induces dermonecrosis, hemolysis, increased vascular permeability, edema, inflammatory response, and platelet aggregation. The chain is Dermonecrotic toxin LarSicTox-alphaIB2bii from Loxosceles arizonica (Arizona brown spider).